The following is a 529-amino-acid chain: Bifunctional purine biosynthesis protein PurH (529 aa).

The region spanning 1 to 148 (MNNARPIRRA…KNHKDTTIIV (148 aa)) is the MGS-like domain.

Belongs to the PurH family.

The catalysed reaction is (6R)-10-formyltetrahydrofolate + 5-amino-1-(5-phospho-beta-D-ribosyl)imidazole-4-carboxamide = 5-formamido-1-(5-phospho-D-ribosyl)imidazole-4-carboxamide + (6S)-5,6,7,8-tetrahydrofolate. The enzyme catalyses IMP + H2O = 5-formamido-1-(5-phospho-D-ribosyl)imidazole-4-carboxamide. The protein operates within purine metabolism; IMP biosynthesis via de novo pathway; 5-formamido-1-(5-phospho-D-ribosyl)imidazole-4-carboxamide from 5-amino-1-(5-phospho-D-ribosyl)imidazole-4-carboxamide (10-formyl THF route): step 1/1. Its pathway is purine metabolism; IMP biosynthesis via de novo pathway; IMP from 5-formamido-1-(5-phospho-D-ribosyl)imidazole-4-carboxamide: step 1/1. The sequence is that of Bifunctional purine biosynthesis protein PurH from Shewanella halifaxensis (strain HAW-EB4).